The primary structure comprises 207 residues: Small ribosomal subunit protein uS2 (207 aa).

It belongs to the universal ribosomal protein uS2 family.

The protein is Small ribosomal subunit protein uS2 of Nitrosopumilus maritimus (strain SCM1).